The chain runs to 807 residues: MPKQDSLWLKSLRWIQKHLVHTIVVPQDPFADLNLDASRPLAYVMKTESLSDIAALSEITTKLGLPSPYEPLVVNGVVAPRVVCLEGRKPLFGERASNEPFLECFMRLLAVHKEKPELDIQLVPVSLYWGRTPGKEDDTMKAAVLERENPTWLRKCLMILFLGRHNFVQFSNAVSLRYMADEHGTDMGIAHKLARVARVHFRRQRKVMTGPVLPNRQAMFHSLLKSESLRKAIQEEAASKKISETQARETAIEYLDEIAANYSDSLVRIAERFLTWLWNKLYSGINIKGAEQIRQLHHDGHEIVYVPCHRSHMDYLLLSYILYYQGMVPPHIAAGINLNFWPAGPLFRRGGAFFIRRSFNGNKLYTAVFREYLDQLFAKGYSVEYFSEGGRSRTGRLLAPKTGMIAMTINSVLRGIERPVTLVPVYLGYDHVMEVATYHKELSGKKKQKESVWQVFGAIRKLGNFGQGYVNFGEPITLQNFLNETAPNWRAEVADDPEQKPTWLTPAVNVLANRVMTRINDAAAASSITLTSLVLLASEQNALERCLLERQLDLYLTLLKRVPYTSFTSVAEGDGKHLVQQGLELNKFSINADPLGEIVSIDANQAISMTYYRNNIIHLFIIPSLIASCLTNNKQISRAHILGIVSDFYPLLKAELFMGIKDLPSYVNQVLDLFIEQGLVQESDTLSVVTEHTSQMLLLAGSVSETLQRYAIIFNLLAHRPKMERSELESESHLLAQRLGALHGITAPEFYDKKLYNTLSVKLKELGYFSEKEDKSDVERIRDQANSLLRASVRQTIVASVTAEHIV.

The short motif at 308 to 313 (CHRSHM) is the HXXXXD motif element.

It belongs to the GPAT/DAPAT family.

Its subcellular location is the cell inner membrane. It carries out the reaction sn-glycerol 3-phosphate + an acyl-CoA = a 1-acyl-sn-glycero-3-phosphate + CoA. It participates in phospholipid metabolism; CDP-diacylglycerol biosynthesis; CDP-diacylglycerol from sn-glycerol 3-phosphate: step 1/3. The chain is Glycerol-3-phosphate acyltransferase from Shewanella sp. (strain MR-4).